The sequence spans 142 residues: Hemoglobin subunit alpha (142 aa).

One can recognise a Globin domain in the interval 2-142; sequence VLSPADKTNV…VSTVLTSKYR (141 aa). The residue at position 4 (S4) is a Phosphoserine. The residue at position 8 (K8) is an N6-succinyllysine. Position 9 is a phosphothreonine (T9). K12 carries the post-translational modification N6-succinyllysine. K17 is subject to N6-acetyllysine; alternate. K17 bears the N6-succinyllysine; alternate mark. Y25 is modified (phosphotyrosine). The residue at position 36 (S36) is a Phosphoserine. Position 41 is an N6-succinyllysine (K41). Phosphoserine is present on S50. H59 contacts O2. H88 contributes to the heme b binding site. Residue S103 is modified to Phosphoserine. T109 is modified (phosphothreonine). A phosphoserine mark is found at S125 and S132. Phosphothreonine occurs at positions 135 and 138. The residue at position 139 (S139) is a Phosphoserine.

This sequence belongs to the globin family. In terms of assembly, heterotetramer of two alpha chains and two beta chains in adult hemoglobin A (HbA); two alpha chains and two delta chains in adult hemoglobin A2 (HbA2); two alpha chains and two epsilon chains in early embryonic hemoglobin Gower-2; two alpha chains and two gamma chains in fetal hemoglobin F (HbF). In terms of tissue distribution, red blood cells.

In terms of biological role, involved in oxygen transport from the lung to the various peripheral tissues. Hemopressin acts as an antagonist peptide of the cannabinoid receptor CNR1. Hemopressin-binding efficiently blocks cannabinoid receptor CNR1 and subsequent signaling. In Pan paniscus (Pygmy chimpanzee), this protein is Hemoglobin subunit alpha (HBA1).